The primary structure comprises 48 residues: ATP synthase protein 8 (48 aa).

Met-1 carries the post-translational modification N-formylmethionine. Over 1–12 the chain is Mitochondrial intermembrane; the sequence is MPQLIPFFFLNQ. The chain crosses the membrane as a helical span at residues 13 to 33; that stretch reads LFYGYLALFALLVLVSWVILP. Residues 34–48 are Mitochondrial matrix-facing; that stretch reads YLLQLQIVRLLITKL.

In terms of assembly, F-type ATP synthases have 2 components, the catalytic core F(1) and the membrane-embedded component F(0), linked together by a central stalk and a peripheral stalk. The central stalk, also called rotor shaft, is often seen as part of F(1). The peripheral stalk is seen as part of F(0). F(0) contains the membrane channel next to the rotor. F-type ATP synthases form dimers but each monomer functions independently in ATP generation. The dimer consists of 18 different polypeptides: ATP1 (subunit alpha, part of F(1), 3 molecules per monomer), ATP2 (subunit beta, part of F(1), 3 molecules per monomer), ATP3 (subunit gamma, part of the central stalk), ATP4 (subunit b, part of the peripheral stalk), ATP5/OSCP (subunit 5/OSCP, part of the peripheral stalk), ATP6 (subunit a, part of the peripheral stalk), ATP7 (subunit d, part of the peripheral stalk), ATP8 (subunit 8, part of the peripheral stalk), OLI1 (subunit c, part of the rotor, 10 molecules per monomer), ATP14 (subunit h, part of the peripheral stalk), ATP15 (subunit epsilon, part of the central stalk), ATP16 (subunit delta, part of the central stalk), ATP17 (subunit f, part of the peripheral stalk), ATP18 (subunit i/j, part of the peripheral stalk). Dimer-specific subunits are ATP19 (subunit k, at interface between monomers), ATP20 (subunit g, at interface between monomers), TIM11 (subunit e, at interface between monomers). Also contains subunit L.

The protein localises to the mitochondrion inner membrane. Functionally, mitochondrial membrane ATP synthase (F(1)F(0) ATP synthase or Complex V) produces ATP from ADP in the presence of a proton gradient across the membrane which is generated by electron transport complexes of the respiratory chain. F-type ATP synthases consist of two structural domains, F(1) - containing the extramembraneous catalytic core, and F(0) - containing the membrane proton channel, linked together by a central stalk and a peripheral stalk. During catalysis, ATP synthesis in the catalytic domain of F(1) is coupled via a rotary mechanism of the central stalk subunits to proton translocation. Part of the complex F(0) domain. Minor subunit located with subunit a/ATP6 in the membrane. The sequence is that of ATP synthase protein 8 from Pichia angusta (Yeast).